The primary structure comprises 132 residues: Small ribosomal subunit protein uS8 (132 aa).

This sequence belongs to the universal ribosomal protein uS8 family. Part of the 30S ribosomal subunit. Contacts proteins S5 and S12.

In terms of biological role, one of the primary rRNA binding proteins, it binds directly to 16S rRNA central domain where it helps coordinate assembly of the platform of the 30S subunit. The chain is Small ribosomal subunit protein uS8 from Halothermothrix orenii (strain H 168 / OCM 544 / DSM 9562).